A 683-amino-acid polypeptide reads, in one-letter code: THO complex subunit 5 (683 aa).

Positions 1-42 are disordered; it reads MSSESSKKRKPKVIRSDGAPAEGKRNRSDTEQEGKYYSEEAE. Ser2 bears the N-acetylserine mark. The interaction with CSF1R stretch occupies residues 2–144; that stretch reads SSESSKKRKP…YEVMHLQKEI (143 aa). Positions 2 to 199 are interaction with THOC7; the sequence is SSESSKKRKP…RLDWELEQRK (198 aa). A phosphoserine mark is found at Ser5 and Ser6. The short motif at 7 to 10 is the Nuclear localization signal element; it reads KKRK. Basic and acidic residues predominate over residues 22–42; it reads EGKRNRSDTEQEGKYYSEEAE. Positions 81–247 form a coiled coil; it reads AIEIEERRIQ…QASLPVQEYL (167 aa). Lys153 participates in a covalent cross-link: Glycyl lysine isopeptide (Lys-Gly) (interchain with G-Cter in SUMO2). Tyr225 is modified (phosphotyrosine; by SRC). A tandem RWD domains region spans residues 247-683; that stretch reads LFMPFDQAHK…NHPQGFFSHR (437 aa). A disordered region spans residues 301-336; it reads FKPPEDSQDDESDSDAEEEQTTKRRRPTLGVQLDDK. A compositionally biased stretch (acidic residues) spans 306–319; the sequence is DSQDDESDSDAEEE. Residues Ser307, Ser312, and Ser314 each carry the phosphoserine modification. Thr328 carries the post-translational modification Phosphothreonine.

It belongs to the THOC5 family. Component of the THO subcomplex, which is composed of THOC1, THOC2, THOC3, THOC5, THOC6 and THOC7. The THO subcomplex interacts with DDX39B to form the THO-DDX39B complex which multimerizes into a 28-subunit tetrameric assembly. Component of the transcription/export (TREX) complex at least composed of ALYREF/THOC4, DDX39B, SARNP/CIP29, CHTOP and the THO subcomplex; in the complex interacts with THOC1, THOC2, THOC5, THOC6 and THOC7; forms a coiled-coil dimer with THOC7; together with THOC6 and THOC7, plays a key structural role in oligomerization of the THO-DDX39B complex. TREX seems to have a dynamic structure involving ATP-dependent remodeling. Interacts with phosphorylated CSF1R. Interacts (via N-terminus) with the NTF2 domain of NXF1. Forms a complex with CEBPB. Interacts with CPSF6; indicative for an association with the cleavage factor Im (CFIm) complex. Interacts with LUZP4. Interacts with NCBP3. In terms of processing, phosphorylated on tyrosine upon binding to activated CSF1R; which causes a dissociation of the two proteins. Phosphorylation on Ser-5 and/or Ser-6 is required for nuclear export. Phosphorylated on Thr-328 in insulin-stimulated adipocytes. Phosphorylation at Tyr-225 modulates mRNA binding. Ubiquitously expressed.

It localises to the nucleus. It is found in the cytoplasm. In terms of biological role, component of the THO subcomplex of the TREX complex which is thought to couple mRNA transcription, processing and nuclear export, and which specifically associates with spliced mRNA and not with unspliced pre-mRNA. Plays a key structural role in the oligomerization of the THO-DDX39B complex. TREX is recruited to spliced mRNAs by a transcription-independent mechanism, binds to mRNA upstream of the exon-junction complex (EJC) and is recruited in a splicing- and cap-dependent manner to a region near the 5' end of the mRNA where it functions in mRNA export to the cytoplasm via the TAP/NXF1 pathway. THOC5 in conjunction with ALYREF/THOC4 functions in NXF1-NXT1 mediated nuclear export of HSP70 mRNA; both proteins enhance the RNA binding activity of NXF1 and are required for NXF1 localization to the nuclear rim. Involved in transcription elongation and genome stability. Involved in alternative polyadenylation site choice by recruiting CPSF6 to 5' region of target genes; probably mediates association of the TREX and CFIm complexes. Its function is as follows. Regulates the expression of myeloid transcription factors CEBPA, CEBPB and GAB2 by enhancing the levels of phosphatidylinositol 3,4,5-trisphosphate. May be involved in the differentiation of granulocytes and adipocytes. Essential for hematopoietic primitive cell survival and plays an integral role in monocytic development. Functionally, (Microbial infection) The TREX complex is essential for the export of Kaposi's sarcoma-associated herpesvirus (KSHV) intronless mRNAs and infectious virus production. The protein is THO complex subunit 5 (THOC5) of Homo sapiens (Human).